Here is a 400-residue protein sequence, read N- to C-terminus: MLKVEMLSTGDEVLHGQIVDTNAAWLADFFFHQGLPLSRRNTVGDNLDDLVTILRERSQHADVLIVNGGLGPTSDDLSALAAATAKGKGLVLHEAWLKEMERYFHERGRVMAPSNRKQAELPASAEFINNPVGTACGFAVQLNRCLMFFTPGVPSEFKVMVEHEILPRLRERFSLPQPPVCLRLTTFGRSESDLAQSLDTLQLPPGVTMGYRSSMPIIELKLTGPASEQQAMEKLWLDVKRVAGQSVIFEGTEGLPAQISRELQNRQFSLTLSEQFTGGLLALQLSRAGAPLLACEVVPSQEETLAQTAHWITERRANHFAGLALAVSGFENEHLNFALATPDGTFALRVRFSTTRYSLAIRQEVCAMMALNMLRRWLNGQDIASEHGWIEVVESMTLSV.

Belongs to the CinA family.

In Escherichia coli O9:H4 (strain HS), this protein is CinA-like protein.